The sequence spans 518 residues: Bifunctional purine biosynthesis protein PurH (518 aa).

An MGS-like domain is found at 1–146 (MSPIALLSVS…KNHQDVLVVT (146 aa)).

The protein belongs to the PurH family.

The catalysed reaction is (6R)-10-formyltetrahydrofolate + 5-amino-1-(5-phospho-beta-D-ribosyl)imidazole-4-carboxamide = 5-formamido-1-(5-phospho-D-ribosyl)imidazole-4-carboxamide + (6S)-5,6,7,8-tetrahydrofolate. It catalyses the reaction IMP + H2O = 5-formamido-1-(5-phospho-D-ribosyl)imidazole-4-carboxamide. The protein operates within purine metabolism; IMP biosynthesis via de novo pathway; 5-formamido-1-(5-phospho-D-ribosyl)imidazole-4-carboxamide from 5-amino-1-(5-phospho-D-ribosyl)imidazole-4-carboxamide (10-formyl THF route): step 1/1. Its pathway is purine metabolism; IMP biosynthesis via de novo pathway; IMP from 5-formamido-1-(5-phospho-D-ribosyl)imidazole-4-carboxamide: step 1/1. This is Bifunctional purine biosynthesis protein PurH from Prochlorococcus marinus (strain NATL2A).